Consider the following 175-residue polypeptide: Transcription factor E (175 aa).

The 85-residue stretch at 4-88 folds into the HTH TFE/IIEalpha-type domain; the sequence is AEDLFINLAK…YWKPNIDQIN (85 aa).

This sequence belongs to the TFE family. As to quaternary structure, monomer. Interaction with RNA polymerase subunits RpoF and RpoE is necessary for Tfe stimulatory transcription activity. Able to interact with Tbp and RNA polymerase in the absence of DNA promoter. Interacts both with the preinitiation and elongation complexes.

In terms of biological role, transcription factor that plays a role in the activation of archaeal genes transcribed by RNA polymerase. Facilitates transcription initiation by enhancing TATA-box recognition by TATA-box-binding protein (Tbp), and transcription factor B (Tfb) and RNA polymerase recruitment. Not absolutely required for transcription in vitro, but particularly important in cases where Tbp or Tfb function is not optimal. It dynamically alters the nucleic acid-binding properties of RNA polymerases by stabilizing the initiation complex and destabilizing elongation complexes. Seems to translocate with the RNA polymerase following initiation and acts by binding to the non template strand of the transcription bubble in elongation complexes. In Saccharolobus islandicus (strain Y.N.15.51 / Yellowstone #2) (Sulfolobus islandicus), this protein is Transcription factor E.